A 201-amino-acid polypeptide reads, in one-letter code: Probable nicotinate-nucleotide adenylyltransferase (201 aa).

This sequence belongs to the NadD family.

It carries out the reaction nicotinate beta-D-ribonucleotide + ATP + H(+) = deamido-NAD(+) + diphosphate. It participates in cofactor biosynthesis; NAD(+) biosynthesis; deamido-NAD(+) from nicotinate D-ribonucleotide: step 1/1. Its function is as follows. Catalyzes the reversible adenylation of nicotinate mononucleotide (NaMN) to nicotinic acid adenine dinucleotide (NaAD). The protein is Probable nicotinate-nucleotide adenylyltransferase of Neisseria meningitidis serogroup C / serotype 2a (strain ATCC 700532 / DSM 15464 / FAM18).